The chain runs to 405 residues: Arginine biosynthesis bifunctional protein ArgJ (405 aa).

6 residues coordinate substrate: threonine 152, lysine 178, threonine 189, glutamate 276, asparagine 400, and threonine 405. Threonine 189 (nucleophile) is an active-site residue.

The protein belongs to the ArgJ family. In terms of assembly, heterotetramer of two alpha and two beta chains.

Its subcellular location is the cytoplasm. It catalyses the reaction N(2)-acetyl-L-ornithine + L-glutamate = N-acetyl-L-glutamate + L-ornithine. The enzyme catalyses L-glutamate + acetyl-CoA = N-acetyl-L-glutamate + CoA + H(+). It functions in the pathway amino-acid biosynthesis; L-arginine biosynthesis; L-ornithine and N-acetyl-L-glutamate from L-glutamate and N(2)-acetyl-L-ornithine (cyclic): step 1/1. It participates in amino-acid biosynthesis; L-arginine biosynthesis; N(2)-acetyl-L-ornithine from L-glutamate: step 1/4. In terms of biological role, catalyzes two activities which are involved in the cyclic version of arginine biosynthesis: the synthesis of N-acetylglutamate from glutamate and acetyl-CoA as the acetyl donor, and of ornithine by transacetylation between N(2)-acetylornithine and glutamate. The sequence is that of Arginine biosynthesis bifunctional protein ArgJ from Pseudomonas fluorescens (strain ATCC BAA-477 / NRRL B-23932 / Pf-5).